We begin with the raw amino-acid sequence, 334 residues long: Coiled-coil domain-containing protein 89 (334 aa).

The stretch at glutamate 75 to leucine 318 forms a coiled coil.

This sequence belongs to the CCDC89 family. As to quaternary structure, interacts (via C-terminus) with hey1/bc8 (via Orange domain). As to expression, in adults, expressed at varying levels in different organs including the liver and brain, with highest expression in the testis.

It localises to the cytoplasm. The protein localises to the nucleus. This Xenopus laevis (African clawed frog) protein is Coiled-coil domain-containing protein 89.